Here is a 246-residue protein sequence, read N- to C-terminus: Phosphonates import ATP-binding protein PhnC (246 aa).

The region spanning 2–246 (IKFENVSKVY…ILDEVYRKEG (245 aa)) is the ABC transporter domain. 35–42 (GTSGAGKS) is a binding site for ATP.

Belongs to the ABC transporter superfamily. Phosphonates importer (TC 3.A.1.9.1) family. In terms of assembly, the complex is composed of two ATP-binding proteins (PhnC), two transmembrane proteins (PhnE) and a solute-binding protein (PhnD).

It is found in the cell membrane. The catalysed reaction is phosphonate(out) + ATP + H2O = phosphonate(in) + ADP + phosphate + H(+). In terms of biological role, part of the ABC transporter complex PhnCDE involved in phosphonates import. Responsible for energy coupling to the transport system. This is Phosphonates import ATP-binding protein PhnC from Lactococcus lactis subsp. cremoris (strain SK11).